The sequence spans 532 residues: Glycerophosphocholine permease GIT4 (532 aa).

6 helical membrane-spanning segments follow: residues 55 to 75 (LWPAFASGAGLFSDGYVNAGI), 98 to 118 (NIGSIGFVGTVVGQLSFGYIS), 126 to 146 (GMLTANVMLIFFTLMCAVASW), 150 to 170 (VQGFFACLTVWRFFLGIAIGA), 201 to 221 (AMIDFGFVVSSFVPLVLLWIF), and 229 to 249 (VWRLSIGLGVIPPLILFFIRL). The N-linked (GlcNAc...) asparagine glycan is linked to N266. A helical membrane pass occupies residues 272-292 (WWLIIKFYWFRLTVVSLIWFI). An N-linked (GlcNAc...) asparagine glycan is attached at N314. 3 consecutive transmembrane segments (helical) span residues 321–341 (WGWSVVFNLFYMPGAFLGAFI), 349–369 (LTLAIGVGAQGIIGIAMSACL), and 375–395 (HVAGFVVVFGIFSTFGEFGPG). The N-linked (GlcNAc...) asparagine glycan is linked to N396. 2 consecutive transmembrane segments (helical) span residues 416-436 (GIAAAIGKIGAFVGTWVFPAI) and 450-470 (VPFYVSSALCLFSAFLTIFFV).

This sequence belongs to the major facilitator superfamily. Sugar transporter (TC 2.A.1.1) family.

The protein localises to the cell membrane. It catalyses the reaction sn-glycerol 3-phosphocholine(out) = sn-glycerol 3-phosphocholine(in). Its function is as follows. Glycerophosphodiester transporter that mediates uptake of glycerophosphocholine (GroPCho) with GIT3. Does not possess detectable glycerophosphoinositol (GroPIns) transport activity. The expanded ability to utilize GroPIns and GroPCho results from the organism's pathogenic nature and its need to occupy a variety of environments within its host organism. This possibility is buttressed by the fact that GroPIns and GroPCho are present and abundant in human fluids. In Candida albicans (strain SC5314 / ATCC MYA-2876) (Yeast), this protein is Glycerophosphocholine permease GIT4.